The following is a 403-amino-acid chain: uncharacterized protein (403 aa).

Transmembrane regions (helical) follow at residues 25-47, 62-81, 88-110, 114-136, 143-165, 175-197, 229-251, 256-278, 290-307, 311-330, 350-372, and 376-398; these read IAFF…ILFL, SLSA…GPLS, VVMS…MNSW, IFMR…TYLS, VLSF…GRFL, WNIA…VYLL, LFFM…GYRL, FFLG…YSSP, GVIL…VLIT, IVLL…FAAH, SIYL…IFWI, and WLGI…IRLL.

It belongs to the major facilitator superfamily.

The protein localises to the cell membrane. This is an uncharacterized protein from Buchnera aphidicola subsp. Baizongia pistaciae (strain Bp).